A 96-amino-acid polypeptide reads, in one-letter code: MRRYEVMIILDPTLDERTVAPSLEQFLSVVRNEGGSVEKVDVWGKRRLAYDIGKNSEGIYAVIDLTAKPSTVHELDRQLNLTEAVLRTKVLRPEIH.

The protein belongs to the bacterial ribosomal protein bS6 family.

Its function is as follows. Binds together with bS18 to 16S ribosomal RNA. The chain is Small ribosomal subunit protein bS6 from Thermobifida fusca (strain YX).